A 223-amino-acid chain; its full sequence is DNA mismatch repair protein MutH (223 aa).

This sequence belongs to the MutH family.

Its subcellular location is the cytoplasm. Its function is as follows. Sequence-specific endonuclease that cleaves unmethylated GATC sequences. It is involved in DNA mismatch repair. In Shewanella sp. (strain MR-4), this protein is DNA mismatch repair protein MutH.